The chain runs to 268 residues: Cytochrome b-c1 complex subunit Rieske-5, mitochondrial (268 aa).

The N-terminal 56 residues, 1-56, are a transit peptide targeting the mitochondrion; sequence MLRIAGRKLSSSAAARSSSAFFTRNPFTFTDDSSSPTRSPSPTSLASQFLDQFRGF. Over 57–105 the chain is Mitochondrial matrix; that stretch reads SSNSVSPAHQTGLVSDLPATVAAIKNPSSKIVYDDSNHERYPPGDPSKR. Residues 106–128 form a helical membrane-spanning segment; sequence AFAYFVLTGGRFVYASLVRLLIL. Residues 129–268 are Mitochondrial intermembrane-facing; that stretch reads KFVLSMSASK…FMEENKLLIG (140 aa). The 89-residue stretch at 178 to 266 folds into the Rieske domain; that stretch reads INLANSVDLG…YSFMEENKLL (89 aa). Residues Cys211, His213, Cys230, and His233 each contribute to the [2Fe-2S] cluster site. An intrachain disulfide couples Cys216 to Cys232.

The protein belongs to the Rieske iron-sulfur protein family. As to quaternary structure, component of the ubiquinol-cytochrome c oxidoreductase (cytochrome b-c1 complex, complex III, CIII), a multisubunit enzyme composed of 3 respiratory subunits cytochrome b, cytochrome c1 and Rieske protein, 2 core protein subunits, and several low-molecular weight protein subunits. The complex exists as an obligatory dimer and forms supercomplexes (SCs) in the inner mitochondrial membrane with cytochrome c oxidase (complex IV, CIV). [2Fe-2S] cluster is required as a cofactor. In terms of tissue distribution, high levels are seen in the flowers while a low level expression is seen in the roots, leaves and stems.

It is found in the mitochondrion inner membrane. The catalysed reaction is a quinol + 2 Fe(III)-[cytochrome c](out) = a quinone + 2 Fe(II)-[cytochrome c](out) + 2 H(+)(out). Its function is as follows. Component of the ubiquinol-cytochrome c oxidoreductase, a multisubunit transmembrane complex that is part of the mitochondrial electron transport chain which drives oxidative phosphorylation. The respiratory chain contains 3 multisubunit complexes succinate dehydrogenase (complex II, CII), ubiquinol-cytochrome c oxidoreductase (cytochrome b-c1 complex, complex III, CIII) and cytochrome c oxidase (complex IV, CIV), that cooperate to transfer electrons derived from NADH and succinate to molecular oxygen, creating an electrochemical gradient over the inner membrane that drives transmembrane transport and the ATP synthase. The cytochrome b-c1 complex catalyzes electron transfer from ubiquinol to cytochrome c, linking this redox reaction to translocation of protons across the mitochondrial inner membrane, with protons being carried across the membrane as hydrogens on the quinol. In the process called Q cycle, 2 protons are consumed from the matrix, 4 protons are released into the intermembrane space and 2 electrons are passed to cytochrome c. The Rieske protein is a catalytic core subunit containing a [2Fe-2S] iron-sulfur cluster. It cycles between 2 conformational states during catalysis to transfer electrons from the quinol bound in the Q(0) site in cytochrome b to cytochrome c1. The chain is Cytochrome b-c1 complex subunit Rieske-5, mitochondrial from Nicotiana tabacum (Common tobacco).